A 423-amino-acid chain; its full sequence is Adenylosuccinate synthetase (423 aa).

Residues 12–18 and 40–42 each bind GTP; these read GDEGKGK and GHT. The active-site Proton acceptor is Asp-13. Positions 13 and 40 each coordinate Mg(2+). IMP-binding positions include 13–16, 38–41, Thr-129, Arg-143, Gln-221, Thr-236, and Arg-300; these read DEGK and NAGH. The active-site Proton donor is the His-41. Substrate is bound at residue 296 to 302; it reads AVTGRER. Residues Arg-302, 328–330, and 408–410 contribute to the GTP site; these read KSD and SVG.

This sequence belongs to the adenylosuccinate synthetase family. Homodimer. Requires Mg(2+) as cofactor.

It is found in the cytoplasm. It catalyses the reaction IMP + L-aspartate + GTP = N(6)-(1,2-dicarboxyethyl)-AMP + GDP + phosphate + 2 H(+). It functions in the pathway purine metabolism; AMP biosynthesis via de novo pathway; AMP from IMP: step 1/2. Plays an important role in the de novo pathway of purine nucleotide biosynthesis. Catalyzes the first committed step in the biosynthesis of AMP from IMP. In Phocaeicola vulgatus (strain ATCC 8482 / DSM 1447 / JCM 5826 / CCUG 4940 / NBRC 14291 / NCTC 11154) (Bacteroides vulgatus), this protein is Adenylosuccinate synthetase.